The following is a 941-amino-acid chain: Glycine dehydrogenase (decarboxylating) (941 aa).

An N6-(pyridoxal phosphate)lysine modification is found at Lys-692.

The protein belongs to the GcvP family. The glycine cleavage system is composed of four proteins: P, T, L and H. The cofactor is pyridoxal 5'-phosphate.

It catalyses the reaction N(6)-[(R)-lipoyl]-L-lysyl-[glycine-cleavage complex H protein] + glycine + H(+) = N(6)-[(R)-S(8)-aminomethyldihydrolipoyl]-L-lysyl-[glycine-cleavage complex H protein] + CO2. In terms of biological role, the glycine cleavage system catalyzes the degradation of glycine. The P protein binds the alpha-amino group of glycine through its pyridoxal phosphate cofactor; CO(2) is released and the remaining methylamine moiety is then transferred to the lipoamide cofactor of the H protein. The sequence is that of Glycine dehydrogenase (decarboxylating) from Mycolicibacterium paratuberculosis (strain ATCC BAA-968 / K-10) (Mycobacterium paratuberculosis).